The primary structure comprises 337 residues: UDP-glucose 4-epimerase (337 aa).

NAD(+)-binding positions include 11 to 12 (YI), 31 to 36 (DNLSNA), 58 to 59 (DL), 80 to 84 (FAGLK), Asn-99, Ser-124, Tyr-149, Lys-153, and Phe-178. 2 residues coordinate substrate: Ser-124 and Tyr-149. The active-site Proton acceptor is Tyr-149. Substrate-binding positions include Asn-179, 199–200 (NL), 216–218 (GIF), Arg-231, and 292–295 (RDGD).

Belongs to the NAD(P)-dependent epimerase/dehydratase family. As to quaternary structure, homodimer. It depends on NAD(+) as a cofactor.

It catalyses the reaction UDP-alpha-D-glucose = UDP-alpha-D-galactose. It functions in the pathway carbohydrate metabolism; galactose metabolism. Functionally, involved in the metabolism of galactose. Catalyzes the conversion of UDP-galactose (UDP-Gal) to UDP-glucose (UDP-Glc) through a mechanism involving the transient reduction of NAD. The protein is UDP-glucose 4-epimerase (galE) of Erwinia amylovora (Fire blight bacteria).